Reading from the N-terminus, the 476-residue chain is Cardiolipin synthase (476 aa).

2 consecutive transmembrane segments (helical) span residues 2 to 22 (HLLI…IIFI) and 31 to 51 (WAWI…YILF). PLD phosphodiesterase domains are found at residues 207 to 234 (INYR…GDEY) and 389 to 416 (EKGF…DIRS). Active-site residues include His-212, Lys-214, Asp-219, His-394, Lys-396, and Asp-401.

It belongs to the phospholipase D family. Cardiolipin synthase subfamily.

It localises to the cell membrane. The catalysed reaction is 2 a 1,2-diacyl-sn-glycero-3-phospho-(1'-sn-glycerol) = a cardiolipin + glycerol. In terms of biological role, catalyzes the reversible phosphatidyl group transfer from one phosphatidylglycerol molecule to another to form cardiolipin (CL) (diphosphatidylglycerol) and glycerol. In Clostridium perfringens (strain SM101 / Type A), this protein is Cardiolipin synthase (cls).